We begin with the raw amino-acid sequence, 177 residues long: Cell division protein ZapC (177 aa).

The protein belongs to the ZapC family. In terms of assembly, interacts directly with FtsZ.

It is found in the cytoplasm. Contributes to the efficiency of the cell division process by stabilizing the polymeric form of the cell division protein FtsZ. Acts by promoting interactions between FtsZ protofilaments and suppressing the GTPase activity of FtsZ. This chain is Cell division protein ZapC, found in Shewanella frigidimarina (strain NCIMB 400).